The sequence spans 83 residues: U20-theraphotoxin-Cg1a 2 (83 aa).

Residues 1–21 (MQVSVLITLAVLGVMFVWTSA) form the signal peptide. A propeptide spanning residues 22 to 47 (AELEERGSDQPAWLKSLERIFQSEER) is cleaved from the precursor. Cystine bridges form between Cys49/Cys63, Cys56/Cys68, and Cys62/Cys76.

The protein belongs to the neurotoxin 10 (Hwtx-1) family. 40 (Jztx-35) subfamily. Expressed by the venom gland.

It is found in the secreted. Functionally, probable ion channel inhibitor. The protein is U20-theraphotoxin-Cg1a 2 of Chilobrachys guangxiensis (Chinese earth tiger tarantula).